The following is a 780-amino-acid chain: Vezatin (780 aa).

2 helical membrane passes run 140 to 160 and 162 to 182; these read ATPN…LIMF and TCWI…YLII. Positions 430 to 467 form a coiled coil; it reads VRSLQLHLKALLNEVIILEDELEKLVCTKETQELLSEA. Disordered regions lie at residues 620–718 and 757–780; these read DPVE…PRDT and QEQT…VEEK. Polar residues predominate over residues 624–643; that stretch reads SVSNSEPPMNSDTEKVNSNA. Basic and acidic residues-rich tracts occupy residues 647–663 and 690–699; these read ETSK…RTEY and TMCHQHESEA. Positions 702 to 711 are enriched in low complexity; it reads PQAAAAGATA. The segment covering 761 to 780 has biased composition (acidic residues); that stretch reads FGDEEEEQLVEGGENEVEEK.

The protein belongs to the vezatin family. In terms of assembly, interacts with USH2A (via the cytoplasmic region); the interaction associates VEZT with the USH2 complex at the stereocilia base. Interacts with myosin MYO7A and the cadherin-catenins complex. As to expression, expressed in developing cochlear hair cells. Isoform 1, isoform 2 and isoform 3 are expressed in testis. In the seminiferous epithelium, present exclusively in the acrosome of spermatids (at protein level).

The protein resides in the cell membrane. The protein localises to the cell projection. Its subcellular location is the stereocilium membrane. It is found in the cell junction. It localises to the adherens junction. The protein resides in the nucleus. The protein localises to the cytoplasmic vesicle. Its subcellular location is the secretory vesicle. It is found in the acrosome. Its function is as follows. Plays a pivotal role in the establishment of adherens junctions and their maintenance in adult life. Required for morphogenesis of the preimplantation embryo, and for the implantation process. The polypeptide is Vezatin (Mus musculus (Mouse)).